The sequence spans 476 residues: MSVITRFAPSPTGFLHIGGARTALFNWLYAKHHGGKMLLRIEDTDRERSTDAAVKAIINGLHWIGLSYDGDPISQFERTERHREVAEQLVKDGKAYYCYASPEELAEMRESARAEGRPPHYDGHWRDRDISEAPKGIKPVIRIKAPKEGATIVRDRVQGDVLFPNKDLDDFIILRSDGTPTYMLAVVVDDHDMGITHIIRGDDHLTNAARQTIIFNAMGWKIPVMAHIPLIHGEDGAKLSKRHGALGVDAYRAMGYLPAALRNYLVRLGWSHGNDEIISTEDMISWFDIDDINKGAARLDFKKLNAINGHYIRMSTDQDLFDSTLSILPEIESGLEIIDKLDKKHRAQFLAAIPHIKERSKTLLELIDGASFIFTKQPLLLDEKAKMLLNEDGQAILKSIYPILESCSYWDTNTLDEALRHYAQKQELKFGTIAQPLRAALTGRATSPGVFDVLVLLGRNESLNRINQQINTTKCS.

A 'HIGH' region motif is present at residues 9 to 19; the sequence is PSPTGFLHIGG. Residues 238 to 242 carry the 'KMSKS' region motif; the sequence is KLSKR. Lys241 lines the ATP pocket.

Belongs to the class-I aminoacyl-tRNA synthetase family. Glutamate--tRNA ligase type 1 subfamily. Monomer.

Its subcellular location is the cytoplasm. It carries out the reaction tRNA(Glu) + L-glutamate + ATP = L-glutamyl-tRNA(Glu) + AMP + diphosphate. In terms of biological role, catalyzes the attachment of glutamate to tRNA(Glu) in a two-step reaction: glutamate is first activated by ATP to form Glu-AMP and then transferred to the acceptor end of tRNA(Glu). The sequence is that of Glutamate--tRNA ligase 1 from Bartonella bacilliformis (strain ATCC 35685 / KC583 / Herrer 020/F12,63).